The primary structure comprises 305 residues: MTNQYGILFKQEQAHDDAIWSVAWGTNKKENSETVVTGSLDDLVKVWKWRDERLDLQWSLEGHQLGVVSVDISHTLPIAASSSLDAHIRLWDLENGKQIKSIDAGPVDAWTLAFSPDSQYLATGTHVGKVNIFGVESGKKEYSLDTRGKFILSIAYSPDGKYLASGAIDGIINIFDIATGKLLHTLEGHAMPIRSLTFSPDSQLLVTASDDGYIKIYDVQHANLAGTLSGHASWVLNVAFCPDDTHFVSSSSDKSVKVWDVGTRTCVHTFFDHQDQVWGVKYNGNGSKIVSVGDDQEIHIYDCPI.

Methionine 1 bears the N-acetylmethionine mark. Position 2 is an N-acetylthreonine; in WD repeat-containing protein 61, N-terminally processed (threonine 2). 7 WD repeats span residues 14–57 (AHDD…LDLQ), 62–101 (GHQL…QIKS), 104–143 (AGPV…KEYS), 146–187 (TRGK…HTLE), 188–227 (GHAM…LAGT), 230–269 (GHAS…CVHT), and 272–305 (DHQD…DCPI).

The protein belongs to the SKI8 family. In terms of assembly, component of the PAF1 complex, which consists of CDC73, PAF1, LEO1, CTR9, RTF1 and SKIC8. The PAF1 complex interacts with PHF5A. Within the PAF1 complex interacts directly with PHF5A. Component of the SKI complex which consists of SKIC2, SKIC3 and SKIC8.

Its subcellular location is the nucleus. The protein resides in the cytoplasm. Its function is as follows. Component of the PAF1 complex (PAF1C) which has multiple functions during transcription by RNA polymerase II and is implicated in regulation of development and maintenance of embryonic stem cell pluripotency. PAF1C associates with RNA polymerase II through interaction with POLR2A CTD non-phosphorylated and 'Ser-2'- and 'Ser-5'-phosphorylated forms and is involved in transcriptional elongation, acting both independently and synergistically with TCEA1 and in cooperation with the DSIF complex and HTATSF1. PAF1C is required for transcription of Hox and Wnt target genes. PAF1C is involved in hematopoiesis and stimulates transcriptional activity of KMT2A/MLL1; it promotes leukemogenesis through association with KMT2A/MLL1-rearranged oncoproteins, such as KMT2A/MLL1-MLLT3/AF9 and KMT2A/MLL1-MLLT1/ENL. PAF1C is involved in histone modifications such as ubiquitination of histone H2B and methylation on histone H3 'Lys-4' (H3K4me3). PAF1C recruits the RNF20/40 E3 ubiquitin-protein ligase complex and the E2 enzyme UBE2A or UBE2B to chromatin which mediate monoubiquitination of 'Lys-120' of histone H2B (H2BK120ub1); UB2A/B-mediated H2B ubiquitination is proposed to be coupled to transcription. PAF1C is involved in mRNA 3' end formation probably through association with cleavage and poly(A) factors. In case of infection by influenza A strain H3N2, PAF1C associates with viral NS1 protein, thereby regulating gene transcription. Required for mono- and trimethylation on histone H3 'Lys-4' (H3K4me3), dimethylation on histone H3 'Lys-79' (H3K4me3). Required for Hox gene transcription. Also acts as a component of the SKI complex, a multiprotein complex that assists the RNA-degrading exosome during the mRNA decay and quality-control pathways. The SKI complex catalyzes mRNA extraction from 80S ribosomal complexes in the 3'-5' direction and channels mRNA to the cytosolic exosome for degradation. SKI-mediated extraction of mRNA from stalled ribosomes allow binding of the Pelota-HBS1L complex and subsequent ribosome disassembly by ABCE1 for ribosome recycling. The sequence is that of Superkiller complex protein 8 from Homo sapiens (Human).